A 374-amino-acid polypeptide reads, in one-letter code: Alanine racemase (374 aa).

Catalysis depends on Lys-34, which acts as the Proton acceptor; specific for D-alanine. Lys-34 bears the N6-(pyridoxal phosphate)lysine mark. Arg-147 provides a ligand contact to substrate. Tyr-271 functions as the Proton acceptor; specific for L-alanine in the catalytic mechanism. Met-319 contributes to the substrate binding site.

It belongs to the alanine racemase family. Pyridoxal 5'-phosphate is required as a cofactor.

It carries out the reaction L-alanine = D-alanine. Its pathway is amino-acid biosynthesis; D-alanine biosynthesis; D-alanine from L-alanine: step 1/1. Its function is as follows. Catalyzes the interconversion of L-alanine and D-alanine. May also act on other amino acids. The polypeptide is Alanine racemase (alr) (Haemophilus ducreyi (strain 35000HP / ATCC 700724)).